We begin with the raw amino-acid sequence, 414 residues long: Peptide chain release factor subunit 1 (414 aa).

The protein belongs to the eukaryotic release factor 1 family. In terms of assembly, heterodimer of two subunits, one of which binds GTP.

The protein resides in the cytoplasm. Directs the termination of nascent peptide synthesis (translation) in response to the termination codons UAA, UAG and UGA. The protein is Peptide chain release factor subunit 1 of Methanococcoides burtonii (strain DSM 6242 / NBRC 107633 / OCM 468 / ACE-M).